Here is a 316-residue protein sequence, read N- to C-terminus: MYSRILATGSYIPANIRTNADLEKMVETSDEWITTRSGIKERRIAGENETVATMGFKAAKNALQLANICPNDIDLVLVATTSHSYAYPSAACQIQGMLDIDDAISFDLAAACTGFIYALSVADQFIKTGKVKKALVIGADINSRKLDETDRSTVILFGDGAGAVILESSDIEGIISTHLHASLDKSNALILPQTQHGEAQSGYIQMQGNATFKLAVRELSNVVEETLRDNHLDKADLDWLVPHQANLRIITATAEKLNMSLDQVVITLDKYGNTSAATVPVALDEAVRDGRIKRGQLLLLEAFGGGWTWGSALVRF.

Active-site residues include Cys-112 and His-243. Positions 244 to 248 (QANLR) are ACP-binding. The active site involves Asn-273.

It belongs to the thiolase-like superfamily. FabH family. Homodimer.

The protein resides in the cytoplasm. The catalysed reaction is malonyl-[ACP] + acetyl-CoA + H(+) = 3-oxobutanoyl-[ACP] + CO2 + CoA. The protein operates within lipid metabolism; fatty acid biosynthesis. In terms of biological role, catalyzes the condensation reaction of fatty acid synthesis by the addition to an acyl acceptor of two carbons from malonyl-ACP. Catalyzes the first condensation reaction which initiates fatty acid synthesis and may therefore play a role in governing the total rate of fatty acid production. Possesses both acetoacetyl-ACP synthase and acetyl transacylase activities. Its substrate specificity determines the biosynthesis of branched-chain and/or straight-chain of fatty acids. This is Beta-ketoacyl-[acyl-carrier-protein] synthase III from Histophilus somni (strain 129Pt) (Haemophilus somnus).